We begin with the raw amino-acid sequence, 692 residues long: Elongation factor G (692 aa).

The tr-type G domain occupies 8-282; the sequence is ENTRNIGIMA…AVIDYLPSPL (275 aa). GTP contacts are provided by residues 17-24, 81-85, and 135-138; these read AHIDAGKT, DTPGH, and NKMD.

It belongs to the TRAFAC class translation factor GTPase superfamily. Classic translation factor GTPase family. EF-G/EF-2 subfamily.

Its subcellular location is the cytoplasm. Functionally, catalyzes the GTP-dependent ribosomal translocation step during translation elongation. During this step, the ribosome changes from the pre-translocational (PRE) to the post-translocational (POST) state as the newly formed A-site-bound peptidyl-tRNA and P-site-bound deacylated tRNA move to the P and E sites, respectively. Catalyzes the coordinated movement of the two tRNA molecules, the mRNA and conformational changes in the ribosome. The polypeptide is Elongation factor G (Bacillus cereus (strain ATCC 10987 / NRS 248)).